The sequence spans 205 residues: Potassium-transporting ATPase KdpC subunit (205 aa).

Residues 9–29 form a helical membrane-spanning segment; that stretch reads VFAVLFLFILGFVYPTVTSLI.

The protein belongs to the KdpC family. As to quaternary structure, the system is composed of three essential subunits: KdpA, KdpB and KdpC.

The protein resides in the cell membrane. Part of the high-affinity ATP-driven potassium transport (or Kdp) system, which catalyzes the hydrolysis of ATP coupled with the electrogenic transport of potassium into the cytoplasm. This subunit acts as a catalytic chaperone that increases the ATP-binding affinity of the ATP-hydrolyzing subunit KdpB by the formation of a transient KdpB/KdpC/ATP ternary complex. This is Potassium-transporting ATPase KdpC subunit from Thermoplasma acidophilum (strain ATCC 25905 / DSM 1728 / JCM 9062 / NBRC 15155 / AMRC-C165).